A 250-amino-acid chain; its full sequence is Proteasome subunit alpha type-8 (250 aa).

This sequence belongs to the peptidase T1A family. As to quaternary structure, component of the outer alpha-ring of the 20S proteasome core which is composed of 28 subunits that are arranged in four stacked rings, resulting in a barrel-shaped structure. The catalytic chamber with the active sites is on the inside of the barrel. Interacts with canonical subunits of the spermatoproteasome, including proteasome activators PSME4 (also called PA200) and PSME3 (also called PA28-gamma). Interacts with proteasome-interacting proteins chaperones including CCT6B and CCT2, ubiquitin ligases (TRIP12, NEDD4, TRIM36 and RAD18), and ubiquitin specific proteases such as USP9X, USP34, USP5 and USP47. Interacts with meiotic proteins cyclin dependent kinase CDK1 and the ATPase TRIP13 as well as proteins of the synaptonemal complex SIX6OS1 and SYCE3.

Its subcellular location is the nucleus. Component of the spermatoproteasome, a proteasome specifically found in testis that promotes acetylation-dependent degradation of histones, thereby participating actively to the exchange of histones during spermatogenesis. The proteasome is a protein complex that degrades unneeded or damaged proteins by proteolysis, a chemical reaction that breaks peptide bonds. Required for 20S core proteasome assembly, essential for the degradation of meiotic proteins RAD51 and RPA1 at late prophase I and the progression of meiosis I during spermatogenesis. Localizes to the synaptonemal complex, a 'zipper'-like structure that holds homologous chromosome pairs in synapsis during meiotic prophase I. This is Proteasome subunit alpha type-8 from Mus musculus (Mouse).